An 88-amino-acid polypeptide reads, in one-letter code: Small ribosomal subunit protein uS17 (88 aa).

The protein belongs to the universal ribosomal protein uS17 family. In terms of assembly, part of the 30S ribosomal subunit.

Functionally, one of the primary rRNA binding proteins, it binds specifically to the 5'-end of 16S ribosomal RNA. This is Small ribosomal subunit protein uS17 from Dechloromonas aromatica (strain RCB).